Reading from the N-terminus, the 430-residue chain is Adenylosuccinate synthetase (430 aa).

GTP-binding positions include 13 to 19 (GDEGKGK) and 41 to 43 (GHT). The active-site Proton acceptor is the Asp14. 2 residues coordinate Mg(2+): Asp14 and Gly41. IMP-binding positions include 14 to 17 (DEGK), 39 to 42 (NAGH), Thr130, Arg144, Gln225, Thr240, and Arg304. His42 acts as the Proton donor in catalysis. 300 to 306 (STTGRAR) lines the substrate pocket. GTP-binding positions include Arg306, 332 to 334 (KLD), and 414 to 416 (STG).

It belongs to the adenylosuccinate synthetase family. Homodimer. Mg(2+) is required as a cofactor.

It localises to the cytoplasm. The enzyme catalyses IMP + L-aspartate + GTP = N(6)-(1,2-dicarboxyethyl)-AMP + GDP + phosphate + 2 H(+). The protein operates within purine metabolism; AMP biosynthesis via de novo pathway; AMP from IMP: step 1/2. Plays an important role in the de novo pathway of purine nucleotide biosynthesis. Catalyzes the first committed step in the biosynthesis of AMP from IMP. The polypeptide is Adenylosuccinate synthetase (Thioalkalivibrio sulfidiphilus (strain HL-EbGR7)).